Reading from the N-terminus, the 521-residue chain is MSVGEDKSGTATPQHNTSIRITDDEERSDEKKFTDDDIITGCKLYVSKDGEYRLAEILQDHMKKGKKVFYVHYQEFNKRLDEWISADRIDFTRALISPQVKVDKKDDKKEGKSKTSKKSKSKNGKTGSKSVTSTPQPNEDTAPGTPRNDDEMDLDNLNVQGLKRPGEEVSREDEIKKLRTSGSMTQNHSEVARVRNLSSVILGEHIIEPWYFSPYPIELTEEDEIYICDFTLAYFGSLKQFERFRTKCSMKHPPGNEIYRDSKVSFWEIDGRKQRTWCRNLCLLSKLFLDHKTLYYDVDPFLFYIMTVKSSQGHHVVGYFSKEKESADGYNVACILTLPCYQKMGFGKLLIQFSYMLSNVENKVGSPEKPLSDLGLLSYRAFWTDTLVKLLVERNNPHLFKKNNPQLLTEASSKDSSVSPPPGGRQSANIQNGNTPSSDITIDEISSITCMTTTDILHTLTALQILRYYKGQHIIVITDHVMAMYDKLVKKIKDKKKHELDPSKLSWTPPAFTANQLRFGW.

Residues 1–32 (MSVGEDKSGTATPQHNTSIRITDDEERSDEKK) form a disordered region. A compositionally biased stretch (polar residues) spans 9-20 (GTATPQHNTSIR). Residues 39–90 (ITGCKLYVSKDGEYRLAEILQDHMKKGKKVFYVHYQEFNKRLDEWISADRID) enclose the Tudor-knot domain. Positions 100–154 (VKVDKKDDKKEGKSKTSKKSKSKNGKTGSKSVTSTPQPNEDTAPGTPRNDDEMDL) are disordered. The segment covering 101–113 (KVDKKDDKKEGKS) has biased composition (basic and acidic residues). Residues 114-123 (KTSKKSKSKN) are compositionally biased toward basic residues. Residues 124 to 133 (GKTGSKSVTS) show a composition bias toward low complexity. The MYST-type HAT domain occupies 192 to 509 (ARVRNLSSVI…LDPSKLSWTP (318 aa)). The C2HC MYST-type; degenerate zinc-finger motif lies at 225–250 (IYICDFTLAYFGSLKQFERFRTKCSM). Residues 275-296 (RTWCRNLCLLSKLFLDHKTLYY) carry the ESA1-RPD3 motif motif. Position 292 is an N6-acetyllysine; by autocatalysis (K292). Residues 333 to 337 (ACILT) and 342 to 348 (QKMGFGK) contribute to the acetyl-CoA site. E368 (proton donor/acceptor) is an active-site residue. S372 serves as a coordination point for acetyl-CoA. Composition is skewed to polar residues over residues 403-418 (NNPQLLTEASSKDSSV) and 426-436 (QSANIQNGNTP). The interval 403 to 438 (NNPQLLTEASSKDSSVSPPPGGRQSANIQNGNTPSS) is disordered.

The protein belongs to the MYST (SAS/MOZ) family. Component of the NuA4 histone acetyltransferase complex. In terms of processing, autoacetylation at Lys-292 is required for proper function.

The protein localises to the nucleus. It is found in the chromosome. The enzyme catalyses L-lysyl-[histone] + acetyl-CoA = N(6)-acetyl-L-lysyl-[histone] + CoA + H(+). The catalysed reaction is L-lysyl-[protein] + acetyl-CoA = N(6)-acetyl-L-lysyl-[protein] + CoA + H(+). It carries out the reaction 2-hydroxyisobutanoyl-CoA + L-lysyl-[protein] = N(6)-(2-hydroxyisobutanoyl)-L-lysyl-[protein] + CoA + H(+). It catalyses the reaction (2E)-butenoyl-CoA + L-lysyl-[protein] = N(6)-(2E)-butenoyl-L-lysyl-[protein] + CoA + H(+). In terms of biological role, catalytic component of the NuA4 histone acetyltransferase (HAT) complex which is involved in epigenetic transcriptional activation of selected genes principally by acetylation of nucleosomal histones H4, H3, H2B, H2A and H2A variant H2A.Z. Acetylates histone H4 to form H4K5ac, H4K8ac, H4K12ac and H4K16ac, histone H3 to form H3K14ac, and histone H2A to form H2AK4ac and H2AK7ac. The NuA4 complex is involved in the DNA damage response and is required for chromosome segregation. The NuA4 complex plays a direct role in repair of DNA double-strand breaks (DSBs) through homologous recombination. Recruitment to promoters depends on H3K4me. Also acetylates non-histone proteins. In addition to protein acetyltransferase, can use different acyl-CoA substrates, such as 2-hydroxyisobutanoyl-CoA (2-hydroxyisobutyryl-CoA) or (2E)-butenoyl-CoA (crotonyl-CoA), and is able to mediate protein 2-hydroxyisobutyrylation and crotonylation, respectively. The protein is Histone acetyltransferase ESA1 (ESA1) of Debaryomyces hansenii (strain ATCC 36239 / CBS 767 / BCRC 21394 / JCM 1990 / NBRC 0083 / IGC 2968) (Yeast).